The chain runs to 259 residues: Isoepoxydon dehydrogenase patN (259 aa).

Positions 96 and 125 each coordinate NADP(+). Catalysis depends on proton donor residues Ser-143 and Ser-144. The NADP(+) site is built by Tyr-158, Lys-162, and Ile-191. Residue Tyr-158 is the Proton acceptor of the active site. Lys-162 functions as the Lowers pKa of active site Tyr in the catalytic mechanism.

This sequence belongs to the short-chain dehydrogenases/reductases (SDR) family.

It is found in the cytoplasm. The protein resides in the cytosol. The catalysed reaction is isoepoxydon + NADP(+) = phyllostine + NADPH + H(+). It participates in mycotoxin biosynthesis; patulin biosynthesis. Its function is as follows. Isoepoxydon dehydrogenase; part of the gene cluster that mediates the biosynthesis of patulin, an acetate-derived tetraketide mycotoxin produced by several fungal species that shows antimicrobial properties against several bacteria. PatN catalyzes the conversion of isoepoxydon into phyllostine. The pathway begins with the synthesis of 6-methylsalicylic acid by the polyketide synthase (PKS) patK via condensation of acetate and malonate units. The 6-methylsalicylic acid decarboxylase patG then catalyzes the decarboxylation of 6-methylsalicylic acid to yield m-cresol (also known as 3-methylphenol). These first reactions occur in the cytosol. The intermediate m-cresol is then transported into the endoplasmic reticulum where the cytochrome P450 monooxygenase patH converts it to m-hydroxybenzyl alcohol, which is further converted to gentisyl alcohol by the cytochrome P450 monooxygenase patI. The oxidoreductases patJ and patO further convert gentisyl alcohol to isoepoxydon in the vacuole. PatN catalyzes then the transformation of isoepoxydon into phyllostine. The cluster protein patF is responsible for the conversion from phyllostine to neopatulin whereas the alcohol dehydrogenase patD converts neopatulin to E-ascladiol. The steps between isoepoxydon and E-ascladiol occur in the cytosol, and E-ascladiol is probably secreted to the extracellular space by one of the cluster-specific transporters patC or patM. Finally, the secreted patulin synthase patE catalyzes the conversion of E-ascladiol to patulin. The chain is Isoepoxydon dehydrogenase patN from Aspergillus clavatus (strain ATCC 1007 / CBS 513.65 / DSM 816 / NCTC 3887 / NRRL 1 / QM 1276 / 107).